Here is a 278-residue protein sequence, read N- to C-terminus: MGIRKLKPTTQSSRYYSVLDFKEITEVVPYKPLTANISYKAGRDNKGRIAVRRKGGRNKRKFRIIDFKRNKFGIPATVKTIEYDPNRSAFIALVCYADGEYRYILAPNGLKVGDKIESGPAAEIKLGNTLPLDKIPAGTNVHNIELHIGKGGQIARTAGSFAVISAKDGDYVSLKLPSSEIRKVRKECLATIGELSNKDHNLVIIGKAGRNRWLGKRPKVRGVVMNPVDHPLGGGEGRTSGGRHPVTPWGKPTKGFKTRKTRPSDRFIVQRRKKNRNR.

A disordered region spans residues 224–262; it reads VMNPVDHPLGGGEGRTSGGRHPVTPWGKPTKGFKTRKTR.

This sequence belongs to the universal ribosomal protein uL2 family. Part of the 50S ribosomal subunit. Forms a bridge to the 30S subunit in the 70S ribosome.

Functionally, one of the primary rRNA binding proteins. Required for association of the 30S and 50S subunits to form the 70S ribosome, for tRNA binding and peptide bond formation. It has been suggested to have peptidyltransferase activity; this is somewhat controversial. Makes several contacts with the 16S rRNA in the 70S ribosome. In Leptospira biflexa serovar Patoc (strain Patoc 1 / Ames), this protein is Large ribosomal subunit protein uL2.